A 634-amino-acid chain; its full sequence is Pescadillo homolog (634 aa).

The region spanning 321–414 (RLRTLFKGLK…QLLPTNKYFM (94 aa)) is the BRCT domain. Disordered regions lie at residues 437-473 (EEKA…EEIE), 491-561 (EYKK…RKAE), and 603-634 (NIDA…LKMA). Residue Ser-453 is modified to Phosphoserine. Acidic residues-rich tracts occupy residues 454-473 (DDDD…EEIE) and 501-527 (VNED…DVEQ). Coiled coils occupy residues 460–546 (SDAE…KVES) and 596–629 (LLRK…AAAK). Basic and acidic residues-rich tracts occupy residues 528-548 (LDDK…ESGK) and 603-623 (NIDA…KKAA). Residues 624 to 634 (AEAAAKALKMA) show a composition bias toward low complexity.

This sequence belongs to the pescadillo family.

The protein localises to the nucleus. Its subcellular location is the nucleolus. It is found in the nucleoplasm. Its function is as follows. Required for maturation of ribosomal RNAs and formation of the large ribosomal subunit. In Drosophila willistoni (Fruit fly), this protein is Pescadillo homolog.